A 77-amino-acid chain; its full sequence is PTS system N-acetylglucosamine-specific EIIB component (77 aa).

Positions 2 to 77 (ASKAEKIVAG…PIAAEIEDMM (76 aa)) constitute a PTS EIIB type-1 domain. Cys24 (phosphocysteine intermediate; for EIIB activity) is an active-site residue.

It catalyses the reaction N(pros)-phospho-L-histidyl-[protein] + N-acetyl-D-glucosamine(out) = N-acetyl-D-glucosamine 6-phosphate(in) + L-histidyl-[protein]. In terms of biological role, the phosphoenolpyruvate-dependent sugar phosphotransferase system (sugar PTS), a major carbohydrate active transport system, catalyzes the phosphorylation of incoming sugar substrates concomitantly with their translocation across the cell membrane. This system is involved in N-acetylglucosamine (GlcNAc) transport. The sequence is that of PTS system N-acetylglucosamine-specific EIIB component from Streptomyces coelicolor (strain ATCC BAA-471 / A3(2) / M145).